The sequence spans 156 residues: Small ribosomal subunit protein uS7 (156 aa).

Belongs to the universal ribosomal protein uS7 family. Part of the 30S ribosomal subunit. Contacts proteins S9 and S11.

Functionally, one of the primary rRNA binding proteins, it binds directly to 16S rRNA where it nucleates assembly of the head domain of the 30S subunit. Is located at the subunit interface close to the decoding center, probably blocks exit of the E-site tRNA. The polypeptide is Small ribosomal subunit protein uS7 (Geobacillus sp. (strain WCH70)).